We begin with the raw amino-acid sequence, 114 residues long: Apokedarcidin (114 aa).

Disulfide bonds link Cys-37–Cys-47 and Cys-88–Cys-95.

It belongs to the neocarzinostatin family.

Binds non-covalently to an enediyne chromophore which is the cytotoxic and mutagenic component of the antibiotic. The chromophore cleaves duplex DNA site-specifically in a single-stranded manner. The apoprotein cleaves proteins selectively, in particular highly basic histones, with H1 proteins being cleaved the more readily. In Actinomycete sp. (strain L585-6 / ATCC 53650), this protein is Apokedarcidin.